We begin with the raw amino-acid sequence, 258 residues long: MPSSCVAAPATECRDLADPAPAPAHRVAIEWPRKRRARNWKPHLPRERLLERGPAALTDAELVALLLGTGGGGRDVFDSARALLARFGDSLRDMLDAQPGVFTTHPGIGDARAAVLIAVTEITRRALVEKARRRMPIDSPGAVEDYLRLRIGMRPYEVFVTLYLDARHGLIEVEESARGSLTRMAVYPREIVRRALMLNAASLIIAHNHPSGAVQPSAEDRRLTRVLHEALALVDAKLLDHVVVGTADTFSFARAGWL.

In terms of domain architecture, MPN spans 136 to 258; the sequence is PIDSPGAVED…TFSFARAGWL (123 aa). Positions 207, 209, and 220 each coordinate Zn(2+). Residues 207 to 220 carry the JAMM motif motif; the sequence is HNHPSGAVQPSAED.

It belongs to the UPF0758 family.

The chain is UPF0758 protein Bcep1808_2579 from Burkholderia vietnamiensis (strain G4 / LMG 22486) (Burkholderia cepacia (strain R1808)).